Consider the following 419-residue polypeptide: Putative competence-damage inducible protein (419 aa).

Belongs to the CinA family.

The sequence is that of Putative competence-damage inducible protein from Streptococcus agalactiae serotype III (strain NEM316).